Consider the following 156-residue polypeptide: Small ribosomal subunit protein uS7 (156 aa).

It belongs to the universal ribosomal protein uS7 family. In terms of assembly, part of the 30S ribosomal subunit. Contacts proteins S9 and S11.

In terms of biological role, one of the primary rRNA binding proteins, it binds directly to 16S rRNA where it nucleates assembly of the head domain of the 30S subunit. Is located at the subunit interface close to the decoding center, probably blocks exit of the E-site tRNA. This Rhizobium leguminosarum bv. trifolii (strain WSM2304) protein is Small ribosomal subunit protein uS7.